The chain runs to 129 residues: Glycine cleavage system H protein (129 aa).

A Lipoyl-binding domain is found at 22–103 (TGTVGITDYA…AHTAWIMKIE (82 aa)). At lysine 63 the chain carries N6-lipoyllysine.

Belongs to the GcvH family. As to quaternary structure, the glycine cleavage system is composed of four proteins: P, T, L and H. The cofactor is (R)-lipoate.

In terms of biological role, the glycine cleavage system catalyzes the degradation of glycine. The H protein shuttles the methylamine group of glycine from the P protein to the T protein. This is Glycine cleavage system H protein from Acidobacterium capsulatum (strain ATCC 51196 / DSM 11244 / BCRC 80197 / JCM 7670 / NBRC 15755 / NCIMB 13165 / 161).